Reading from the N-terminus, the 769-residue chain is Serine protease HtrA-like (769 aa).

A compositionally biased stretch (basic residues) spans 1 to 20; sequence MDIGKKHVIPKSQYRRKRRE. Positions 1–390 are disordered; that stretch reads MDIGKKHVIP…ATSKLNKGRA (390 aa). Composition is skewed to basic and acidic residues over residues 21–64 and 71–108; these read FFHN…ERFK and LEQR…DVSK. Polar residues predominate over residues 126–137; sequence YEQNSEATLSTK. Residues 138-186 show a composition bias toward basic and acidic residues; the sequence is STDKVESSDMRKLSPDKNKVGHEEQHVLSKPSEHDKETRIDFESSRTDS. Composition is skewed to polar residues over residues 202–221 and 247–262; these read GNES…NTVP and QQSQ…YGDS. Residues 264 to 295 are compositionally biased toward basic and acidic residues; it reads QNDKSNHENDLSHHTPSKSDDKDNVMREDHIV. Over residues 298–308 the composition is skewed to polar residues; it reads NPDNDINTPSL. Positions 310–330 are enriched in basic and acidic residues; that stretch reads KIDDDRKLDEKIHVEDKHKQN. A compositionally biased stretch (polar residues) spans 331–347; the sequence is ADSSETVGYQSQSSVSH. A compositionally biased stretch (basic and acidic residues) spans 348–362; that stretch reads RSTEKRNMAINDHHK. Polar residues predominate over residues 366–390; sequence QKLNTKTSANNNQKKATSKLNKGRA. Residues 410–430 form a helical membrane-spanning segment; it reads LVILMGIIILIVILNAIFNNV. Residues H504, D534, and S619 each act as charge relay system in the active site. One can recognise a PDZ domain in the interval 680 to 733; the sequence is IASLNSFERQAVKLPGKVKNGVVVDQVDNNGLADQSSLKKGDVITELDGKLLED.

This sequence belongs to the peptidase S1C family.

It localises to the cell membrane. This is Serine protease HtrA-like from Staphylococcus aureus (strain bovine RF122 / ET3-1).